Reading from the N-terminus, the 693-residue chain is Glycine--tRNA ligase beta subunit (693 aa).

Belongs to the class-II aminoacyl-tRNA synthetase family. As to quaternary structure, tetramer of two alpha and two beta subunits.

The protein localises to the cytoplasm. The catalysed reaction is tRNA(Gly) + glycine + ATP = glycyl-tRNA(Gly) + AMP + diphosphate. In Halalkalibacterium halodurans (strain ATCC BAA-125 / DSM 18197 / FERM 7344 / JCM 9153 / C-125) (Bacillus halodurans), this protein is Glycine--tRNA ligase beta subunit (glyS).